The sequence spans 493 residues: Glutamyl-tRNA(Gln) amidotransferase subunit A (493 aa).

Active-site charge relay system residues include Lys-79 and Ser-159. The active-site Acyl-ester intermediate is the Ser-183.

It belongs to the amidase family. GatA subfamily. In terms of assembly, heterotrimer of A, B and C subunits.

The enzyme catalyses L-glutamyl-tRNA(Gln) + L-glutamine + ATP + H2O = L-glutaminyl-tRNA(Gln) + L-glutamate + ADP + phosphate + H(+). Its function is as follows. Allows the formation of correctly charged Gln-tRNA(Gln) through the transamidation of misacylated Glu-tRNA(Gln) in organisms which lack glutaminyl-tRNA synthetase. The reaction takes place in the presence of glutamine and ATP through an activated gamma-phospho-Glu-tRNA(Gln). This Rhizobium meliloti (strain 1021) (Ensifer meliloti) protein is Glutamyl-tRNA(Gln) amidotransferase subunit A.